The sequence spans 321 residues: Methionyl-tRNA formyltransferase (321 aa).

112-115 (GLLP) provides a ligand contact to (6S)-5,6,7,8-tetrahydrofolate.

It belongs to the Fmt family.

The catalysed reaction is L-methionyl-tRNA(fMet) + (6R)-10-formyltetrahydrofolate = N-formyl-L-methionyl-tRNA(fMet) + (6S)-5,6,7,8-tetrahydrofolate + H(+). Its function is as follows. Attaches a formyl group to the free amino group of methionyl-tRNA(fMet). The formyl group appears to play a dual role in the initiator identity of N-formylmethionyl-tRNA by promoting its recognition by IF2 and preventing the misappropriation of this tRNA by the elongation apparatus. This is Methionyl-tRNA formyltransferase from Chlamydia caviae (strain ATCC VR-813 / DSM 19441 / 03DC25 / GPIC) (Chlamydophila caviae).